Consider the following 393-residue polypeptide: Pyrimidine monooxygenase RutA (393 aa).

FMN contacts are provided by residues 79 to 80 (IK), N145, E154, 170 to 171 (RY), and S220.

This sequence belongs to the NtaA/SnaA/DszA monooxygenase family. RutA subfamily.

It catalyses the reaction uracil + FMNH2 + NADH + O2 = (Z)-3-ureidoacrylate + FMN + NAD(+) + H2O + H(+). The enzyme catalyses thymine + FMNH2 + NADH + O2 = (Z)-2-methylureidoacrylate + FMN + NAD(+) + H2O + H(+). Functionally, catalyzes the pyrimidine ring opening between N-3 and C-4 by an unusual flavin hydroperoxide-catalyzed mechanism, adding oxygen atoms in the process to yield ureidoacrylate peracid, that immediately reacts with FMN forming ureidoacrylate and FMN-N(5)-oxide. The FMN-N(5)-oxide reacts spontaneously with NADH to produce FMN. Requires the flavin reductase RutF to regenerate FMN in vivo. In Escherichia coli O139:H28 (strain E24377A / ETEC), this protein is Pyrimidine monooxygenase RutA.